Reading from the N-terminus, the 1350-residue chain is 1-phosphatidylinositol 4,5-bisphosphate phosphodiesterase gamma plc-3 (1350 aa).

The segment at 1 to 40 is disordered; sequence MQHGSLGPSSSSRKTTVTSTAGSVHLHHRSSNGFSTASRA. Over residues 9 to 20 the composition is skewed to low complexity; the sequence is SSSSRKTTVTST. Positions 31–40 are enriched in polar residues; that stretch reads SNGFSTASRA. The PI-PLC X-box domain maps to 352-503; that stretch reads HDMSRPLSHY…LKKKIIVKHK (152 aa). Catalysis depends on residues histidine 367 and histidine 419. The disordered stretch occupies residues 570–594; the sequence is NPNDDTVSVSGDEEREEETPSGFGV. SH2 domains are found at residues 605 to 704 and 715 to 804; these read WFHG…TIPC and WFSA…RFPV. An SH3 domain is found at 832-890; sequence DKEVQARALRPYRGTADDELSFPANVIITVLRKEEGLWRGRYGSLTGWFPSAHVQEILP. The region spanning 855–960 is the PH domain; that stretch reads ANVIITVLRK…WQNNLFELTR (106 aa). Positions 982–1092 constitute a PI-PLC Y-box domain; the sequence is LSNLVVYCQA…CGYLLKPDYM (111 aa). The C2 domain occupies 1099 to 1220; the sequence is PTNTEKFATA…CGFRSVPLKN (122 aa). The disordered stretch occupies residues 1270-1350; it reads GDSIPREMAP…KFSFGKSSKS (81 aa). The segment covering 1283–1329 has biased composition (polar residues); it reads TSATDRSLDSPTNSESRATLLSGQRGSQDSMDSAAETSSIASGTISS. Over residues 1340–1350 the composition is skewed to low complexity; sequence KKFSFGKSSKS.

Requires Ca(2+) as cofactor. As to expression, expressed in intestine, isthmus of the pharynx, proximal gonad sheath cells, spermatheca and uterine sheath cells. In males, expressed in the valve cell, the vas deferens and retractor and ventral protactor muscles.

The enzyme catalyses a 1,2-diacyl-sn-glycero-3-phospho-(1D-myo-inositol-4,5-bisphosphate) + H2O = 1D-myo-inositol 1,4,5-trisphosphate + a 1,2-diacyl-sn-glycerol + H(+). Its function is as follows. Mediates the production of the second messenger molecules diacylglycerol (DAG) and inositol 1,4,5-trisphosphate (IP3) which plays an important role in the regulation of intracellular signaling cascades. Regulates basal and ovulatory sheath cell contractions by controlling Ca(2+) oscillations via IP3-mediated activation of IP3 receptor itr-1. In intestinal epithelial cells, regulates Ca(2+) oscillations which control posterior body wall muscle contractions required for defecation by IP3-mediated activation of itr-1 and probably by activating TRPM channels gon-2 and gtl-1 by reducing PIP2 levels. By activating tpa-1 via DAG production, required for the expression of antimicrobial peptide nlp-29 in the epidermis in response to fungal infection or physical injury. By triggering Ca(2+) transient via IP3-mediated activation of IPR3 receptor itr-1 in ASH sensory neurons, involved in avoidance behavior in response to nose touch. Probably by regulating neuronal transmission in ALA neurons, mediates the decrease in pharyngeal pumping and locomotion during the quiescent state that precedes each larval molt, downstream of lin-3 and receptor let-23 and upstream of tpa-1 but not itr-1. During embryogenesis, may play an role in epidermal morphogenesis together with plc-1. Probably downstream of receptor daf-2, regulates male-sex muscle excitability in the absence of food. The protein is 1-phosphatidylinositol 4,5-bisphosphate phosphodiesterase gamma plc-3 of Caenorhabditis elegans.